Consider the following 127-residue polypeptide: Histone H2A (127 aa).

Basic residues predominate over residues 1 to 20 (MSGRGKGGKAKTGGKAKSRS). Positions 1–23 (MSGRGKGGKAKTGGKAKSRSSRA) are disordered. S2 carries the post-translational modification N-acetylserine. Position 2 is a phosphoserine (S2). N6-acetyllysine; partial is present on residues K6, K9, and K11. At Q106 the chain carries N5-methylglutamine. K121 participates in a covalent cross-link: Glycyl lysine isopeptide (Lys-Gly) (interchain with G-Cter in ubiquitin).

This sequence belongs to the histone H2A family. The nucleosome is a histone octamer containing two molecules each of H2A, H2B, H3 and H4 assembled in one H3-H4 heterotetramer and two H2A-H2B heterodimers. The octamer wraps approximately 147 bp of DNA. In terms of processing, monoubiquitination of Lys-121 gives a specific tag for epigenetic transcriptional repression. Post-translationally, phosphorylation on Ser-2 is enhanced during mitosis. Phosphorylation on Ser-2 directly represses transcription.

It is found in the nucleus. The protein localises to the chromosome. Core component of nucleosome. Nucleosomes wrap and compact DNA into chromatin, limiting DNA accessibility to the cellular machineries which require DNA as a template. Histones thereby play a central role in transcription regulation, DNA repair, DNA replication and chromosomal stability. DNA accessibility is regulated via a complex set of post-translational modifications of histones, also called histone code, and nucleosome remodeling. This chain is Histone H2A (his-3), found in Caenorhabditis elegans.